Reading from the N-terminus, the 222-residue chain is Probable transaldolase (222 aa).

The Schiff-base intermediate with substrate role is filled by K91.

Belongs to the transaldolase family. Type 3B subfamily.

The protein resides in the cytoplasm. The catalysed reaction is D-sedoheptulose 7-phosphate + D-glyceraldehyde 3-phosphate = D-erythrose 4-phosphate + beta-D-fructose 6-phosphate. It functions in the pathway carbohydrate degradation; pentose phosphate pathway; D-glyceraldehyde 3-phosphate and beta-D-fructose 6-phosphate from D-ribose 5-phosphate and D-xylulose 5-phosphate (non-oxidative stage): step 2/3. Transaldolase is important for the balance of metabolites in the pentose-phosphate pathway. The protein is Probable transaldolase of Chlorobium limicola (strain DSM 245 / NBRC 103803 / 6330).